We begin with the raw amino-acid sequence, 242 residues long: Probable transcriptional regulatory protein XCC3027 (242 aa).

The protein belongs to the TACO1 family.

It localises to the cytoplasm. The sequence is that of Probable transcriptional regulatory protein XCC3027 from Xanthomonas campestris pv. campestris (strain ATCC 33913 / DSM 3586 / NCPPB 528 / LMG 568 / P 25).